Here is a 57-residue protein sequence, read N- to C-terminus: U13-myrmicitoxin-Mri1a (57 aa).

The N-terminal stretch at 1 to 23 (MKIIHVLLLVAVVAITMSPSIMA) is a signal peptide. The propeptide occupies 24-29 (ESVAEA). A Glutamic acid 1-amide modification is found at E56.

As to expression, expressed by the venom gland.

The protein localises to the secreted. Functionally, induces paralysis 1 hour after injection into insects (blowfly L.caesar) but does not appear to be lethal. The protein is U13-myrmicitoxin-Mri1a of Manica rubida (European giant red ant).